The sequence spans 46 residues: DNA-directed RNA polymerase subunit Rpo12 (46 aa).

Cys-9, Cys-24, and Cys-27 together coordinate Zn(2+).

The protein belongs to the archaeal Rpo12/eukaryotic RPC10 RNA polymerase subunit family. As to quaternary structure, part of the RNA polymerase complex. Interacts with Rpo3. Forms an Rpo3-Rpo10-Rpo11-Rpo12 complex upon coexpression. Requires Zn(2+) as cofactor.

The protein localises to the cytoplasm. It carries out the reaction RNA(n) + a ribonucleoside 5'-triphosphate = RNA(n+1) + diphosphate. Functionally, DNA-dependent RNA polymerase (RNAP) catalyzes the transcription of DNA into RNA using the four ribonucleoside triphosphates as substrates. In Methanocaldococcus jannaschii (strain ATCC 43067 / DSM 2661 / JAL-1 / JCM 10045 / NBRC 100440) (Methanococcus jannaschii), this protein is DNA-directed RNA polymerase subunit Rpo12.